Here is a 476-residue protein sequence, read N- to C-terminus: Transmembrane transporter FPSE_08127 (476 aa).

The helical transmembrane segment at 72 to 92 (ILAIPAALGALGSIGGSLCII) threads the bilayer. A glycan (N-linked (GlcNAc...) asparagine) is linked at Asn111. 9 helical membrane passes run 133–153 (LVGVQIIIAQTLVTAGGVVAI), 164–184 (GTCTVAFGLISAIAVTAFSAI), 192–212 (WLTWIGFITFVIGVFIFVVAV), 231–251 (WAPIAYPSFVVGMVSVTNIFI), 275–295 (ACLVAGFIVGAMYLSFSLVIY), 317–337 (VAYGVSLPGLILGVGIYQHVA), 364–384 (LGINIALGTAAFIVAEAVPIL), 387–407 (LLGLAGAICLAPFSLIFPALL), and 431–451 (LIMMFGFFMMIAGFYSVVVLI).

The protein belongs to the amino acid/polyamine transporter 2 family.

The protein resides in the membrane. Its function is as follows. Transmembrane transporter; part of the Fusarium detoxification of benzoxazolinone cluster involved in the degradation of benzoxazolinones produced by the host plant. Maize, wheat, and rye produce the 2 benzoxazinone phytoanticipins 2,4-dihy-droxy-7-methoxy-1,4-benzoxazin-3-one (DIMBOA) and 2,4-dihydroxy-1,4-benzoxazin-3-one (DIBOA) that, due to their inherent instability once released, spontaneously degrade to the more stable corresponding benzoxazolinones, 6-methoxy-2-benzoxazolinone (MBOA) and 2-benzoxazolinone (BOA), respectively. FPSE_08127 is proposed to shuttle metabolites of benzoxazolinone degradation. The sequence is that of Transmembrane transporter FPSE_08127 from Fusarium pseudograminearum (strain CS3096) (Wheat and barley crown-rot fungus).